An 871-amino-acid chain; its full sequence is MSDSSSSSTSAFVSSLVFNFAIFCAFIGLFLCLRPREKHVYQPRCIIDTQPKEEKPEPSPSSPFGLFAYVVKRSETYLIQYAGVDGYFFIRYLFTFGALCILGCLVLFPILLPVNATNGVGEKGFDILSFSNVKNHNRFYAHVFLSWLFFGFTIFIIYRELRYYVIFRHAMQSSGLYNNLPSSSTMLLTELPNSVLNDEETLHELFPNASEFTCVRDLKKLEKKVKKRSDLGNKYESTLNSLINKSVKKHNKLVKKHKPLPSTLDYTAYVKKRPTHRLKFLIGKKVDTIDYCRDTIAELDEVVDKLQTSLEERKKVGSVFIRFRSQTDLQTAYQAFLYSKKFRKYRFGRALVGIAPEDIVWSNLDLSMYTRRGKKTISNTILTLMIIFWAFPVAVVGCISNVNYLIEKVHFLKFIDHMPPKLLGIITGILPSVALSILMSLVPPFIKFLGKFGGALTVQEIENYCQNWYYAFQVVQVFLVTTMTSAATSAVVQVIKEPASSMTLLASNLPKASNFYISYFLLQGLSIPGGALLQIVTLLLSKVLGRIFDNTPRKKWNRWNQLSAPSWGTVYPVYSLLVTIMICYSIIAPIIIGFAAVAFVLIYFAYSYNLIYVLGHNADAKGRNYPRALFQVFVGLYLAEVCLIGLFVLAKNWGATVLEAVFLGFTVACHLYFKYKFLPLMDAVPISAIESVSERPEIKYPMDLGTSEMKNVGRAYPEILEKLSSSSGSDEFLETSSRTSENTKEKIDKDDEGFAITNISSVHKMPSFVLSYFSDLAASNRILTGFDRVLQLLPSFYDIPVRVRNVQYVSPALKATPPSVWIPKDPLGLSTYAIEDARGKVDIFDDNTTFNEKGNLQYTGPPPDYDEAIRS.

A run of 11 helical transmembrane segments spans residues 11–31 (AFVS…GLFL), 92–112 (YLFT…PILL), 139–159 (FYAH…IIYR), 380–400 (TILT…GCIS), 422–442 (LLGI…MSLV), 475–495 (VQVF…VQVI), 520–540 (FLLQ…TLLL), 562–582 (LSAP…TIMI), 586–606 (IIAP…YFAY), 629–649 (LFQV…LFVL), and 653–673 (WGAT…HLYF). Phosphoserine occurs at positions 725, 726, 727, 729, 737, and 761. Residues 727–740 (SGSDEFLETSSRTS) are compositionally biased toward polar residues. The disordered stretch occupies residues 727–746 (SGSDEFLETSSRTSENTKEK).

Belongs to the CSC1 (TC 1.A.17) family.

It localises to the golgi apparatus membrane. Functionally, acts as an osmosensitive calcium-permeable cation channel. This is an uncharacterized protein from Schizosaccharomyces pombe (strain 972 / ATCC 24843) (Fission yeast).